Reading from the N-terminus, the 413-residue chain is Histidine--tRNA ligase (413 aa).

Belongs to the class-II aminoacyl-tRNA synthetase family. In terms of assembly, homodimer.

Its subcellular location is the cytoplasm. It catalyses the reaction tRNA(His) + L-histidine + ATP = L-histidyl-tRNA(His) + AMP + diphosphate + H(+). The sequence is that of Histidine--tRNA ligase from Neorickettsia sennetsu (strain ATCC VR-367 / Miyayama) (Ehrlichia sennetsu).